The sequence spans 461 residues: GTPase Der (461 aa).

EngA-type G domains follow at residues 3 to 167 (PQVI…GEKQ) and 190 to 371 (LKLA…AAWS). GTP-binding positions include 9–16 (GRPNVGKS), 56–60 (DTAGW), 119–122 (NKAE), 196–203 (GRPNAGKS), 249–253 (DTAGM), and 314–317 (NKWD). Residues 372–456 (KRVPTAALNR…PIRLTLRSPK (85 aa)) enclose the KH-like domain.

It belongs to the TRAFAC class TrmE-Era-EngA-EngB-Septin-like GTPase superfamily. EngA (Der) GTPase family. As to quaternary structure, associates with the 50S ribosomal subunit.

Functionally, GTPase that plays an essential role in the late steps of ribosome biogenesis. This Novosphingobium aromaticivorans (strain ATCC 700278 / DSM 12444 / CCUG 56034 / CIP 105152 / NBRC 16084 / F199) protein is GTPase Der.